The primary structure comprises 70 residues: Sec-independent protein translocase protein TatA (70 aa).

Residues M1–T21 form a helical membrane-spanning segment. Positions M42 to V70 are disordered. Basic and acidic residues predominate over residues L57–V70.

The protein belongs to the TatA/E family. In terms of assembly, the Tat system comprises two distinct complexes: a TatABC complex, containing multiple copies of TatA, TatB and TatC subunits, and a separate TatA complex, containing only TatA subunits. Substrates initially bind to the TatABC complex, which probably triggers association of the separate TatA complex to form the active translocon.

It is found in the cell inner membrane. Its function is as follows. Part of the twin-arginine translocation (Tat) system that transports large folded proteins containing a characteristic twin-arginine motif in their signal peptide across membranes. TatA could form the protein-conducting channel of the Tat system. In Methylococcus capsulatus (strain ATCC 33009 / NCIMB 11132 / Bath), this protein is Sec-independent protein translocase protein TatA.